Reading from the N-terminus, the 233-residue chain is 7-cyano-7-deazaguanine synthase (233 aa).

Position 11-21 (11-21 (FSGGQDSTTCL)) interacts with ATP. 4 residues coordinate Zn(2+): C199, C214, C217, and C220.

The protein belongs to the QueC family. Zn(2+) serves as cofactor.

It carries out the reaction 7-carboxy-7-deazaguanine + NH4(+) + ATP = 7-cyano-7-deazaguanine + ADP + phosphate + H2O + H(+). It functions in the pathway purine metabolism; 7-cyano-7-deazaguanine biosynthesis. Functionally, catalyzes the ATP-dependent conversion of 7-carboxy-7-deazaguanine (CDG) to 7-cyano-7-deazaguanine (preQ(0)). This chain is 7-cyano-7-deazaguanine synthase, found in Herminiimonas arsenicoxydans.